We begin with the raw amino-acid sequence, 1423 residues long: Autophagy-related protein 11 (1423 aa).

Coiled-coil stretches lie at residues 551 to 589 and 625 to 978; these read DDELLRSLQDDKSKLESKLKTAESRVRRLEDLLHRQSQA and SEGT…ASEL. Disordered stretches follow at residues 583–660 and 1028–1048; these read LHRQ…SNRA and RAERAAQNPNDSSDPGTSLRK. The span at 585–602 shows a compositional bias: polar residues; it reads RQSQASRPGNLFQPQTNS. Residues 631 to 648 are compositionally biased toward basic and acidic residues; sequence LLRRISELENELREEKQR. Composition is skewed to polar residues over residues 650-660 and 1034-1047; these read SRIQNDLSNRA and QNPNDSSDPGTSLR. A coiled-coil region spans residues 1102–1130; it reads HRIKEVEHKARKWQKEARSYRDRAHIAQK. The interval 1327-1423 is disordered; it reads SLRAAAPETP…DYTYESPGKK (97 aa). Positions 1383-1395 are enriched in basic and acidic residues; it reads KTAEPRRMLDRQE.

This sequence belongs to the ATG11 family. In terms of assembly, homodimer and potential homooligomers. Interacts with ATG1 kinase and the ATG19 and ATG34 cargo protein transporters. Interacts with ATG9, ATG17 and ATG20.

Its subcellular location is the preautophagosomal structure membrane. The protein localises to the vacuole membrane. Its function is as follows. Involved in cytoplasm to vacuole transport (Cvt), pexophagy, mitophagy and nucleophagy. Recruits mitochondria for their selective degradation via autophagy (mitophagy) during starvation, through its interaction with ATG32. Works as scaffold proteins that recruit ATG proteins to the pre-autophagosome (PAS), the site of vesicle/autophagosome formation. Required for ATG9 anterograde transport from the mitochondria to the PAS. Also recruits the ATG19-prAPE1 complex to the PAS. Required for the Cvt vesicles completion. Plays a role in morphological differentiation and cephalosporin production. This chain is Autophagy-related protein 11, found in Hapsidospora chrysogena (Acremonium chrysogenum).